The primary structure comprises 424 residues: UDP-N-acetylglucosamine 1-carboxyvinyltransferase (424 aa).

22 to 23 (KN) is a phosphoenolpyruvate binding site. Arg-98 lines the UDP-N-acetyl-alpha-D-glucosamine pocket. The Proton donor role is filled by Cys-122. Cys-122 is subject to 2-(S-cysteinyl)pyruvic acid O-phosphothioketal. Residues 127 to 131 (RPVDQ), Asp-312, and Ile-334 each bind UDP-N-acetyl-alpha-D-glucosamine.

This sequence belongs to the EPSP synthase family. MurA subfamily.

The protein localises to the cytoplasm. It carries out the reaction phosphoenolpyruvate + UDP-N-acetyl-alpha-D-glucosamine = UDP-N-acetyl-3-O-(1-carboxyvinyl)-alpha-D-glucosamine + phosphate. It functions in the pathway cell wall biogenesis; peptidoglycan biosynthesis. Functionally, cell wall formation. Adds enolpyruvyl to UDP-N-acetylglucosamine. The protein is UDP-N-acetylglucosamine 1-carboxyvinyltransferase of Xanthomonas oryzae pv. oryzae (strain MAFF 311018).